The chain runs to 117 residues: ISPLGSVTKKNQDSTAYNWTGNKTANGNWPVLGICAVHRKKDIGGSGNSPVIPFGTTLKTDKDIWLPDGVGYKSSFNVDDTGSGPKKTDYWIDIYYSKDTKAAINYGVVKLSYTYST.

Residue D89 is part of the active site.

The catalysed reaction is Hydrolysis of (1-&gt;4)-beta-linkages between N-acetylmuramic acid and N-acetyl-D-glucosamine residues in a peptidoglycan and between N-acetyl-D-glucosamine residues in chitodextrins.. This chain is B-enzyme (lyzB), found in Bacillus subtilis.